The chain runs to 444 residues: Glycogen synthase (444 aa).

Arg15 lines the ADP-alpha-D-glucose pocket.

The protein belongs to the glycosyltransferase 1 family. Bacterial/plant glycogen synthase subfamily.

It carries out the reaction [(1-&gt;4)-alpha-D-glucosyl](n) + ADP-alpha-D-glucose = [(1-&gt;4)-alpha-D-glucosyl](n+1) + ADP + H(+). It functions in the pathway glycan biosynthesis; glycogen biosynthesis. Its function is as follows. Synthesizes alpha-1,4-glucan chains using ADP-glucose. This is Glycogen synthase from Deinococcus radiodurans (strain ATCC 13939 / DSM 20539 / JCM 16871 / CCUG 27074 / LMG 4051 / NBRC 15346 / NCIMB 9279 / VKM B-1422 / R1).